Reading from the N-terminus, the 355-residue chain is DNA polymerase IV (355 aa).

The 182-residue stretch at I6–G187 folds into the UmuC domain. Residues D10 and D105 each contribute to the Mg(2+) site. E106 is a catalytic residue.

The protein belongs to the DNA polymerase type-Y family. As to quaternary structure, monomer. The cofactor is Mg(2+).

The protein localises to the cytoplasm. It carries out the reaction DNA(n) + a 2'-deoxyribonucleoside 5'-triphosphate = DNA(n+1) + diphosphate. Functionally, poorly processive, error-prone DNA polymerase involved in untargeted mutagenesis. Copies undamaged DNA at stalled replication forks, which arise in vivo from mismatched or misaligned primer ends. These misaligned primers can be extended by PolIV. Exhibits no 3'-5' exonuclease (proofreading) activity. May be involved in translesional synthesis, in conjunction with the beta clamp from PolIII. The protein is DNA polymerase IV of Alkalilimnicola ehrlichii (strain ATCC BAA-1101 / DSM 17681 / MLHE-1).